The chain runs to 450 residues: E3 ubiquitin-protein ligase XB3 (450 aa).

ANK repeat units follow at residues 11-40, 46-75, 79-108, 113-142, 158-187, and 195-225; these read GDEHDFFRAAQLGDLDALAALLAADPSLAR, DRLSVLHIAAANGRIEVLSMFLDRGAPPDA, HKQTPLMLAAMHGKIDCVLKLLQADANILM, HARTCLHHAAYYGHVDCLQAILAAAQTTPV, HGATPLHLAARQGRPGCVQVLLENGAIVSA, and PGSTSLHLAARSGNLDCIRKLLAWGADRLQR. Residues 291–312 are disordered; it reads ILNGTKYSLPSPSPGDDSADDD. The RING-type zinc-finger motif lies at 323 to 372; that stretch reads CCICFDQACTIEVQDCGHQMCAPCTLALCCHNKPNPTTLTPPSPACPFCR. Positions 385–450 are disordered; sequence SACDPDKPSS…SNLDKPEHDL (66 aa).

As to quaternary structure, interacts (via ankyrin repeats) with XA21. In terms of processing, phosphorylated by XA21.

It carries out the reaction S-ubiquitinyl-[E2 ubiquitin-conjugating enzyme]-L-cysteine + [acceptor protein]-L-lysine = [E2 ubiquitin-conjugating enzyme]-L-cysteine + N(6)-ubiquitinyl-[acceptor protein]-L-lysine.. It functions in the pathway protein modification; protein ubiquitination. Functionally, E3 ubiquitin-protein ligase required for full accumulation of the LRR receptor kinase XA21 and XA21-mediated disease resistance. Binding to XA21 may stabilize the receptor kinase and maintain its protein level. Autoubiquitinated in vitro. The protein is E3 ubiquitin-protein ligase XB3 (XB3) of Oryza sativa subsp. japonica (Rice).